We begin with the raw amino-acid sequence, 453 residues long: tRNA modification GTPase MnmE (453 aa).

(6S)-5-formyl-5,6,7,8-tetrahydrofolate-binding residues include Arg-28, Glu-86, and Lys-125. The 155-residue stretch at 221 to 375 folds into the TrmE-type G domain; the sequence is GIKIAIVGEP…LIKYLEETSL (155 aa). Position 231 (Asn-231) interacts with K(+). GTP-binding positions include 231 to 236, 250 to 256, and 276 to 279; these read NAGKSS, TNIPGTT, and DTAG. Ser-235 is a binding site for Mg(2+). K(+) contacts are provided by Thr-250, Ile-252, and Thr-255. Thr-256 provides a ligand contact to Mg(2+). (6S)-5-formyl-5,6,7,8-tetrahydrofolate is bound at residue Lys-453.

It belongs to the TRAFAC class TrmE-Era-EngA-EngB-Septin-like GTPase superfamily. TrmE GTPase family. In terms of assembly, homodimer. Heterotetramer of two MnmE and two MnmG subunits. K(+) is required as a cofactor.

The protein localises to the cytoplasm. In terms of biological role, exhibits a very high intrinsic GTPase hydrolysis rate. Involved in the addition of a carboxymethylaminomethyl (cmnm) group at the wobble position (U34) of certain tRNAs, forming tRNA-cmnm(5)s(2)U34. The protein is tRNA modification GTPase MnmE of Mycoplasmoides gallisepticum (strain R(low / passage 15 / clone 2)) (Mycoplasma gallisepticum).